A 347-amino-acid chain; its full sequence is NADH-ubiquinone oxidoreductase chain 2 (347 aa).

10 helical membrane passes run Pro3 to Ser23, His25 to Met45, Tyr59 to Ala79, Leu96 to Pro116, Gly127 to Pro147, Asn150 to Leu170, Ile193 to Ile213, Ile240 to Phe260, Ser274 to Met294, and Ile323 to Leu343.

Belongs to the complex I subunit 2 family. As to quaternary structure, core subunit of respiratory chain NADH dehydrogenase (Complex I) which is composed of 45 different subunits. Interacts with TMEM242.

It localises to the mitochondrion inner membrane. The catalysed reaction is a ubiquinone + NADH + 5 H(+)(in) = a ubiquinol + NAD(+) + 4 H(+)(out). Core subunit of the mitochondrial membrane respiratory chain NADH dehydrogenase (Complex I) which catalyzes electron transfer from NADH through the respiratory chain, using ubiquinone as an electron acceptor. Essential for the catalytic activity and assembly of complex I. In Lemur catta (Ring-tailed lemur), this protein is NADH-ubiquinone oxidoreductase chain 2.